The primary structure comprises 363 residues: NAD(P)H-quinone oxidoreductase subunit 1, chloroplastic (363 aa).

6 helical membrane passes run 30–50 (LVPI…IVWL), 98–118 (FSIG…VIPF), 127–147 (LSIG…GLLM), 248–268 (YSGI…LVSS), 300–320 (VFGT…FLFI), and 336–356 (LLNL…LLTT).

The protein belongs to the complex I subunit 1 family. In terms of assembly, NDH is composed of at least 16 different subunits, 5 of which are encoded in the nucleus.

The protein resides in the plastid. It localises to the chloroplast thylakoid membrane. It catalyses the reaction a plastoquinone + NADH + (n+1) H(+)(in) = a plastoquinol + NAD(+) + n H(+)(out). The enzyme catalyses a plastoquinone + NADPH + (n+1) H(+)(in) = a plastoquinol + NADP(+) + n H(+)(out). Its function is as follows. NDH shuttles electrons from NAD(P)H:plastoquinone, via FMN and iron-sulfur (Fe-S) centers, to quinones in the photosynthetic chain and possibly in a chloroplast respiratory chain. The immediate electron acceptor for the enzyme in this species is believed to be plastoquinone. Couples the redox reaction to proton translocation, and thus conserves the redox energy in a proton gradient. This Drimys granadensis protein is NAD(P)H-quinone oxidoreductase subunit 1, chloroplastic.